Consider the following 577-residue polypeptide: Arginine--tRNA ligase (577 aa).

The 'HIGH' region signature appears at 122 to 132 (PNVAKEMHVGH).

The protein belongs to the class-I aminoacyl-tRNA synthetase family. As to quaternary structure, monomer.

The protein resides in the cytoplasm. The enzyme catalyses tRNA(Arg) + L-arginine + ATP = L-arginyl-tRNA(Arg) + AMP + diphosphate. In Salmonella enteritidis PT4 (strain P125109), this protein is Arginine--tRNA ligase.